Here is a 930-residue protein sequence, read N- to C-terminus: A disintegrin and metalloproteinase with thrombospondin motifs 5 (930 aa).

The first 16 residues, 1–16 (MLLGWASLLLCAFRLP), serve as a signal peptide directing secretion. The propeptide occupies 17 to 261 (LAAVGPAATP…PQTWWRRRRR (245 aa)). Disordered stretches follow at residues 24-69 (ATPA…QRRR) and 206-231 (RASC…PSGR). A compositionally biased stretch (low complexity) spans 31-42 (AGQPPTAAAAAQ). Residues 46–59 (RQGEEVQERAEPPG) show a composition bias toward basic and acidic residues. A Cysteine switch motif is present at residues 207–214 (ASCETPAS). Residue Cys-209 participates in Zn(2+) binding. The 210-residue stretch at 267–476 (RQVELLLVAD…GHGNCLLDLP (210 aa)) folds into the Peptidase M12B domain. Intrachain disulfides connect Cys-342–Cys-394, Cys-371–Cys-376, Cys-388–Cys-471, Cys-426–Cys-455, Cys-497–Cys-519, Cys-508–Cys-529, Cys-514–Cys-548, and Cys-542–Cys-553. His-410 is a Zn(2+) binding site. Glu-411 is an active-site residue. Zn(2+)-binding residues include His-414 and His-420. Positions 485-566 (ELPGQTYDAT…TKKKYYSTSS (82 aa)) constitute a Disintegrin domain. Asn-498 carries N-linked (GlcNAc...) asparagine glycosylation. The region spanning 567 to 622 (HGNWGSWGSWGQCSRSCGGGVQFAYRHCNNPAPRNNGRYCTGKRAIYRSCSLMPCP) is the TSP type-1 1 domain. C-linked (Man) tryptophan glycosylation is found at Trp-570 and Trp-573. Cystine bridges form between Cys-579–Cys-616, Cys-583–Cys-621, and Cys-594–Cys-606. Ser-582 carries an O-linked (Fuc...) serine glycan. Asn-728, Asn-802, and Asn-807 each carry an N-linked (GlcNAc...) asparagine glycan. A spacer region spans residues 732–874 (TKIVGTFNKK…HGSNKVGSHT (143 aa)). Residues 875–929 (SQPQWVTGPWLACSRTCDTGWHTRTVQCQDGNRKLAKGCPLSQRPSAFKQCLLKK) enclose the TSP type-1 2 domain.

Zn(2+) is required as a cofactor. In terms of processing, the precursor is cleaved by furin and PCSK7 outside of the cell. Glycosylated. Can be O-fucosylated by POFUT2 on a serine or a threonine residue found within the consensus sequence C1-X(2)-(S/T)-C2-G of the TSP type-1 repeat domains where C1 and C2 are the first and second cysteine residue of the repeat, respectively. Fucosylated repeats can then be further glycosylated by the addition of a beta-1,3-glucose residue by the glucosyltransferase, B3GALTL. Fucosylation mediates the efficient secretion of ADAMTS family members. Can also be C-glycosylated with one or two mannose molecules on tryptophan residues within the consensus sequence W-X-X-W of the TPRs, and N-glycosylated. These other glycosylations can also facilitate secretion. In terms of tissue distribution, expressed at low level in placenta primarily but also detected in heart and brain, cervix, uterus, bladder, esophagus, rib cartilage, chondroblastoma, fibrous tissue and a joint capsule from an arthritic patient.

The protein localises to the secreted. It is found in the extracellular space. It localises to the extracellular matrix. In terms of biological role, metalloproteinase that plays an important role in connective tissue organization, development, inflammation and cell migration. Extracellular matrix (ECM) degrading enzyme that show proteolytic activity toward the hyalectan group of chondroitin sulfate proteoglycans (CSPGs) including ACAN, VCAN, BCAN and NCAN. Cleavage within the hyalectans occurs at Glu-Xaa recognition motifs. Plays a role in embryonic development, including limb and cardiac morphogenesis, and skeletal muscle development through its VCAN remodeling properties. Cleaves VCAN in the pericellular matrix surrounding myoblasts, facilitating myoblast contact and fusion which is required for skeletal muscle development and regeneration. Participates in development of brown adipose tissue and browning of white adipose tissue. Plays an important role for T-lymphocyte migration from draining lymph nodes following viral infection. This Homo sapiens (Human) protein is A disintegrin and metalloproteinase with thrombospondin motifs 5 (ADAMTS5).